The following is a 127-amino-acid chain: Phosphoribosyl-AMP cyclohydrolase (127 aa).

Position 83 (Asp-83) interacts with Mg(2+). Cys-84 contacts Zn(2+). Asp-85 and Asp-87 together coordinate Mg(2+). 2 residues coordinate Zn(2+): Cys-100 and Cys-107.

This sequence belongs to the PRA-CH family. In terms of assembly, homodimer. The cofactor is Mg(2+). Zn(2+) serves as cofactor.

It is found in the cytoplasm. It catalyses the reaction 1-(5-phospho-beta-D-ribosyl)-5'-AMP + H2O = 1-(5-phospho-beta-D-ribosyl)-5-[(5-phospho-beta-D-ribosylamino)methylideneamino]imidazole-4-carboxamide. It functions in the pathway amino-acid biosynthesis; L-histidine biosynthesis; L-histidine from 5-phospho-alpha-D-ribose 1-diphosphate: step 3/9. In terms of biological role, catalyzes the hydrolysis of the adenine ring of phosphoribosyl-AMP. This chain is Phosphoribosyl-AMP cyclohydrolase, found in Methanocaldococcus jannaschii (strain ATCC 43067 / DSM 2661 / JAL-1 / JCM 10045 / NBRC 100440) (Methanococcus jannaschii).